A 367-amino-acid polypeptide reads, in one-letter code: Uroporphyrinogen decarboxylase (367 aa).

Position 1 is an N-acetylmethionine (Met1). Coproporphyrinogen I is bound by residues Arg37, Ala39, Arg41, Arg50, Asp86, Tyr164, Ser219, and His339. The coproporphyrinogen III site is built by Arg37, Ala39, and Arg41. Coproporphyrinogen III contacts are provided by Asp86, Tyr164, Ser219, and His339.

This sequence belongs to the uroporphyrinogen decarboxylase family. Homodimer.

It localises to the cytoplasm. It is found in the cytosol. The catalysed reaction is uroporphyrinogen III + 4 H(+) = coproporphyrinogen III + 4 CO2. The enzyme catalyses uroporphyrinogen I + 4 H(+) = coproporphyrinogen I + 4 CO2. It participates in porphyrin-containing compound metabolism; protoporphyrin-IX biosynthesis; coproporphyrinogen-III from 5-aminolevulinate: step 4/4. Its function is as follows. Catalyzes the sequential decarboxylation of the four acetate side chains of uroporphyrinogen to form coproporphyrinogen and participates in the fifth step in the heme biosynthetic pathway. Isomer I or isomer III of uroporphyrinogen may serve as substrate, but only coproporphyrinogen III can ultimately be converted to heme. In vitro also decarboxylates pentacarboxylate porphyrinogen I. This Homo sapiens (Human) protein is Uroporphyrinogen decarboxylase.